An 87-amino-acid polypeptide reads, in one-letter code: Small ribosomal subunit protein bS20 (87 aa).

The segment at 1 to 22 (MANSAQARKRARQSVKQRAHNA) is disordered. A compositionally biased stretch (basic residues) spans 7–19 (ARKRARQSVKQRA).

Belongs to the bacterial ribosomal protein bS20 family.

Binds directly to 16S ribosomal RNA. The polypeptide is Small ribosomal subunit protein bS20 (Neisseria gonorrhoeae (strain ATCC 700825 / FA 1090)).